The sequence spans 354 residues: MSLDKIMNEAISPWMKGDGPDSDIVLSSRIRLARNFKKYQFSTMQNEEEAKQIQELFKKEFINKTVEPFGEFELLKMNELTPLQRRVLVEKHLISPNLAGTEYGACLLSENEHISVMLNEEDHIRIQCLFSGLQLSEALQSANQIDNWIEKEVEYAFDESLGYITSCPTNVGTGLRASVMIHLPGLVLTKRISRIIQVIQKLGLVVRGIYGEGSEALGNIFQVSNQMTLGKSEEDIIADLKSVIQQIIQQEKMARELIVQNSSIELEDKVYRSYGILANSRLIQSAEAANCLSDLRLGIDLGYIKGISRNILTELMVLTQPGILQQYAGGPLGPEERDYRRATLIRERLRIEKN.

One can recognise a Phosphagen kinase C-terminal domain in the interval 24–254; sequence IVLSSRIRLA…QQIIQQEKMA (231 aa). ATP contacts are provided by residues 27–31, His-92, Arg-125, 176–180, and 207–212; these read SSRIR, RASVM, and RGIYGE. The short motif at 337–342 is the RDXXRA motif of the pArg binding pocket involved in allosteric regulation element; sequence RDYRRA.

It belongs to the ATP:guanido phosphotransferase family.

It catalyses the reaction L-arginyl-[protein] + ATP = N(omega)-phospho-L-arginyl-[protein] + ADP + H(+). With respect to regulation, appears to be allosterically activated by the binding of pArg-containing polypeptides to the pArg-binding pocket localized in the C-terminal domain of McsB. Functionally, catalyzes the specific phosphorylation of arginine residues in a large number of proteins. Is part of the bacterial stress response system. Protein arginine phosphorylation has a physiologically important role and is involved in the regulation of many critical cellular processes, such as protein homeostasis, motility, competence, and stringent and stress responses, by regulating gene expression and protein activity. The sequence is that of Protein-arginine kinase from Bacillus cereus (strain AH187).